Here is a 546-residue protein sequence, read N- to C-terminus: MKNNWIDVLDESLVKDFYNNQTSEEQQEGLNTTLSFGTAGIRGKFGLGEGRLNKFTVSKVALGFAHYLTSSIAHPVVVIHYDTRHLSPEFAQIIANILASHDIKVYLADTYRTTPDLSFAVRYLQADAGVMITASHNPKDYNGIKVYGEDGAQLSTDASAQLSTYIDKLGHPLHINVPSLTTEQQSLIHSVPSEVREDYFKNVQDLVGTIPQSDLKVVFTSLHGTSVPIVPDILSSLNFNQFELVASQCEPDSDFSSVASANPEDHKAFDQSIELANLIDADLLIGTDPDADRLGIVERDAEGNIYYYNGNQIGALLLNYRIKQTEGLPNRIMFQSIVSGGLAKSLAQYHNVNFKEVLTGFKYIAAEIRHLSPEQNFIFGYEESYGFLARPFVRDKDAIQIVPLMIKYAAELKNEGRMLKDELEDITRNVGNFNDKLFSHTFEGTQGKAKIENIMTQFRSETPTEMCGLKVIAIEDFETGKKTDLQNDEVSDITLPKANVIKIYFNEGFIALRPSGTEPKIKLYVSLSCDHFDVIAQKINDAIFNS.

S135 serves as the catalytic Phosphoserine intermediate. Mg(2+)-binding residues include S135, D288, D290, and D292.

Belongs to the phosphohexose mutase family. Mg(2+) serves as cofactor.

The enzyme catalyses alpha-D-glucose 1-phosphate = alpha-D-glucose 6-phosphate. Its pathway is glycolipid metabolism; diglucosyl-diacylglycerol biosynthesis. Functionally, catalyzes the interconversion between glucose-6-phosphate and alpha-glucose-1-phosphate. This is the first step in the biosynthesis of diglucosyl-diacylglycerol (Glc2-DAG), i.e. a glycolipid found in the membrane, which is also used as a membrane anchor for lipoteichoic acid (LTA). This Staphylococcus epidermidis (strain ATCC 35984 / DSM 28319 / BCRC 17069 / CCUG 31568 / BM 3577 / RP62A) protein is Phosphoglucomutase (pgcA).